We begin with the raw amino-acid sequence, 90 residues long: Small ribosomal subunit protein bS16 (90 aa).

The protein belongs to the bacterial ribosomal protein bS16 family.

This chain is Small ribosomal subunit protein bS16, found in Streptococcus thermophilus (strain CNRZ 1066).